The primary structure comprises 523 residues: Tyrosine-protein kinase transforming protein Src (523 aa).

Positions 1-50 (MGSSKSKPKDPSQRRRSLEPPDSTHHGGFPASQTPNKTAAPDTHRTPSRS) are disordered. The N-myristoyl glycine; by host moiety is linked to residue Gly-2. A compositionally biased stretch (basic and acidic residues) spans 7–25 (KPKDPSQRRRSLEPPDSTH). An SH3 domain is found at 71 to 139 (TSPQRAGALA…PSNYVAPSDS (69 aa)). One can recognise an SH2 domain in the interval 145-242 (WYFGKITRRE…GLCHRLTNVC (98 aa)). Positions 264–514 (LRLEVKLGQG…TFEYLQAQLL (251 aa)) constitute a Protein kinase domain. ATP-binding positions include 270–278 (LGQGYFGEV) and Lys-292. Asp-383 (proton acceptor) is an active-site residue. At Tyr-413 the chain carries Phosphotyrosine; by autocatalysis.

It belongs to the protein kinase superfamily. Tyr protein kinase family. SRC subfamily. Homodimer. Post-translationally, the phosphorylated form is termed pp60v-src.

The catalysed reaction is L-tyrosyl-[protein] + ATP = O-phospho-L-tyrosyl-[protein] + ADP + H(+). In terms of biological role, this phosphoprotein, required for both the initiation and the maintenance of neoplastic transformation, is a protein kinase that catalyzes the phosphorylation of tyrosine residues in vitro. The polypeptide is Tyrosine-protein kinase transforming protein Src (V-SRC) (Gallus gallus (Chicken)).